The following is an 84-amino-acid chain: uncharacterized protein (84 aa).

Helical transmembrane passes span 8–28 (IYFF…VNLL), 30–50 (INVI…ISTI), and 63–83 (VLFM…LYIP).

It localises to the cell membrane. This is an uncharacterized protein from Methanocaldococcus jannaschii (strain ATCC 43067 / DSM 2661 / JAL-1 / JCM 10045 / NBRC 100440) (Methanococcus jannaschii).